The following is a 330-amino-acid chain: Autoinducer 2 import system permease protein LsrD (330 aa).

Residues 1 to 4 (MRIR) lie on the Cytoplasmic side of the membrane. A helical membrane pass occupies residues 5–25 (YGWELALAALLVIEIVAFGAI). Residues 26 to 42 (NPRMLDLNMLLFSTSDF) are Periplasmic-facing. Residues 43–63 (ICIGIVALPLTMVIVSGGIDI) form a helical membrane-spanning segment. Topologically, residues 64–67 (SFGS) are cytoplasmic. Transmembrane regions (helical) follow at residues 68-88 (TIGLCAIALGVLFQSGVPMPL) and 89-109 (AILLTLLLGALCGLINAGLII). The Cytoplasmic portion of the chain corresponds to 110 to 115 (YTKVNP). The chain crosses the membrane as a helical span at residues 116 to 136 (LVITLGTLYLFAGSALLLSGM). The Periplasmic portion of the chain corresponds to 137-159 (AGATGYEGIGGFPMAFTDFANLD). A helical transmembrane segment spans residues 160–180 (VLGLPVPLIIFLICLLVFWLW). At 181–209 (LHKTHAGRNVFLIGQSPRVAVYSAIPVNR) the chain is on the cytoplasmic side. A helical membrane pass occupies residues 210–230 (TLCALYAMTGLASAVAAVLLV). Residues 231-237 (SYFGSAR) are Periplasmic-facing. 2 helical membrane-spanning segments follow: residues 238 to 258 (SDLGASFLMPAITAVVLGGAN) and 259 to 279 (IYGGSGSIIGTAIAVLLVGYL). Residues 280 to 285 (QQGLQM) lie on the Periplasmic side of the membrane. Residues 286–306 (AGVPNQVSSALSGALLIVVVV) form a helical membrane-spanning segment. Residues 307–330 (GRSVSLHRQQIKEWLARRANNPLP) lie on the Cytoplasmic side of the membrane.

It belongs to the binding-protein-dependent transport system permease family. AraH/RbsC subfamily. In terms of assembly, the complex is composed of two ATP-binding proteins (LsrA), two transmembrane proteins (LsrC and LsrD) and a solute-binding protein (LsrB).

It localises to the cell inner membrane. In terms of biological role, part of the ABC transporter complex LsrABCD involved in autoinducer 2 (AI-2) import. Probably responsible for the translocation of the substrate across the membrane. The sequence is that of Autoinducer 2 import system permease protein LsrD (lsrD) from Escherichia coli (strain SMS-3-5 / SECEC).